The sequence spans 448 residues: Fibulin-5 (448 aa).

A signal peptide spans 1-23 (MPGFKRILTVTVLALCLPTPGNA). In terms of domain architecture, EGF-like 1; calcium-binding spans 42 to 82 (DVDECRTIPEACRGDMMCVNQNGGYLCIPRTNPVYRGPYSN). Cystine bridges form between C46–C59, C53–C68, C131–C144, C138–C153, C155–C166, C172–C181, C177–C190, C192–C205, C211–C221, C217–C230, C232–C245, C251–C262, C258–C271, C273–C286, C292–C305, C299–C314, and C320–C332. Positions 54-56 (RGD) match the Cell attachment site motif. The EGF-like 2; calcium-binding domain maps to 127–167 (DVDECATDSHQCNPTQICINTEGGYTCSCTDGYWLLEGQCL). An EGF-like 3; calcium-binding domain is found at 168-206 (DIDECRYGYCQQLCANVPGSYSCTCNPGFTLNEDGRSCQ). Residues 207 to 246 (DVNECATENPCVQTCVNTYGSFICRCDPGYELEDDGVHCS) form the EGF-like 4; calcium-binding domain. The segment at 245–448 (CSDMDECSFS…LRIYVSQYPF (204 aa)) is interaction with LOXL1. An EGF-like 5; calcium-binding domain is found at 247-287 (DMDECSFSEFLCQHECVNQPGTYFCSCPAGYILLDDNRSCQ). N283 and N296 each carry an N-linked (GlcNAc...) asparagine glycan. The EGF-like 6; calcium-binding domain occupies 288-333 (DINECEHRNHTCILQQTCYNLQGGFKCIDPIRCEEPYLRISDNRCM).

The protein belongs to the fibulin family. In terms of assembly, homodimer. Monomer, homodimerizes in presence of Ca(2+). Interacts with ELN. Interacts (via N-terminus) with the integrins ITGAV/ITGB3, ITGAV/ITGB5 and ITGA9/ITGB1. Interacts with FBN1 (via N-terminal domain). Forms a ternary complex with ELN and FBN1. Interacts with EFEMP2 with moderate affinity. Interacts with LOXL1. Post-translationally, N-glycosylated.

The protein localises to the secreted. The protein resides in the extracellular space. Its subcellular location is the extracellular matrix. Essential for elastic fiber formation, is involved in the assembly of continuous elastin (ELN) polymer and promotes the interaction of microfibrils and ELN. Stabilizes and organizes elastic fibers in the skin, lung and vasculature. Promotes adhesion of endothelial cells through interaction of integrins and the RGD motif. Vascular ligand for integrin receptors which may play a role in vascular development and remodeling. May act as an adapter that mediates the interaction between FBN1 and ELN. The chain is Fibulin-5 (FBLN5) from Bos taurus (Bovine).